Consider the following 177-residue polypeptide: ATP synthase subunit delta (177 aa).

It belongs to the ATPase delta chain family. As to quaternary structure, F-type ATPases have 2 components, F(1) - the catalytic core - and F(0) - the membrane proton channel. F(1) has five subunits: alpha(3), beta(3), gamma(1), delta(1), epsilon(1). F(0) has three main subunits: a(1), b(2) and c(10-14). The alpha and beta chains form an alternating ring which encloses part of the gamma chain. F(1) is attached to F(0) by a central stalk formed by the gamma and epsilon chains, while a peripheral stalk is formed by the delta and b chains.

The protein localises to the cell inner membrane. Its function is as follows. F(1)F(0) ATP synthase produces ATP from ADP in the presence of a proton or sodium gradient. F-type ATPases consist of two structural domains, F(1) containing the extramembraneous catalytic core and F(0) containing the membrane proton channel, linked together by a central stalk and a peripheral stalk. During catalysis, ATP synthesis in the catalytic domain of F(1) is coupled via a rotary mechanism of the central stalk subunits to proton translocation. This protein is part of the stalk that links CF(0) to CF(1). It either transmits conformational changes from CF(0) to CF(1) or is implicated in proton conduction. This Azobacteroides pseudotrichonymphae genomovar. CFP2 protein is ATP synthase subunit delta.